The chain runs to 2922 residues: MSRYLGPRLRITRRLGHLSGLTRKKPAFKPLNPVNPFGPRKIIPPGEHGRNKSFKKKPYESCEYDYLIRLKLKQRLRFHYGLTERQLVRYVQQAKKIKGSTGRVLLRLLEMRLDNIVFRLHMAPTIKAARQLISHGHILINKKKVTIPSYQCEPKDIITVAPKIISMELVSRFLSEFDREKSRYDRILQILEFGRKGVTMPTKNLKTSSKTLSKNSQSRKYVKNEKRAKIQSLKIGAVLNVTINHRGRKEADAISYGFGKMIVIHPFFVGKQSINKNVRVIIYKKSKNNKILYTYPANPFYLHLENLRKLNSLDVAKLFSHSNNQISSKFNKKPLKKSITRKSKRSISALILMNGAKMLPKTNLERRKRVNKDSATNLTENKQIKKEFSPSVFVRIVAAKCLNSKSKQKLLNVSSFQSSLKKFNPSFSKDPVAYREKYVYTKTSRALRLFGTRFYATILKNTRDVKNSSFIERKKFDSRIIGKTPKVNLTKTTRKAEAKAPDFYSSIFKKSSDNQSQNFLNAELLKRESQNSSFSSTFNNSNKVEFSNGASLPVTFKSGKVNNTLIPKLNSNKLADQSVNAQLMNVPALFKQYKNIFSKLSSLKNQKNFKKPKYTNLRSKILTNFLFESKNLSLNLNHFHNFIFVVFSKFCKVLVSKTNLNFKIDNILSISQNFKEFFKHRNFEAKSIDSKKFSMDILLFSLKLKHFTKLNNKNVGTEIGKTREFELSSSILDKKIQNDISLLLLLDKMKTHLQTSLNFVNQFFSSEILMNGIRPYFSSIFSFVLKSEELVKTILTNVINSIKTVLTCSKLTTLKISQQSFLGSAASEKLEKTESFFLENNLIEKLVNLNSNQSNTLYKKIINFAMVSIPKAVFLVDYSENQISLLNKYSLYSAKKQKIQMVKTLNFLKRYNLINYSNFENFKQMIQLNIKNHQTILVHFKDSILNKSKLNLRRNKLSPDSELVLNLEQKLLINQTKCKISLLESLKSNSKLSLFSQFNQNCNQILCRTKIFLNILNKKNSLFQKLNLLKDFHLIKGKDYESLKNLLNNQFQLLQKLKSLVSIVDFPQSVSQSSLLNRVLNKNLEKITETFGSISTLWKVLILQKQNKLNVTESVKQNILQNISVAKAEFTQTVLITILNKTDLSAFIKHYQSSKINNFTFISKLHKINLLDKLNKLNLLDDTVFVQMFSDIREKLAVKKLKQTNVVLTKFLEFGTMSKLSQTELLSLDSFIQTAFLNSNSLTNNIQHLGHKERDNFVRSSSFWKKFSFLLTPSLIKKGLENLKTLNSISSSQYSYLILKLQNLYDQNKTLNLGLNKQYVHEKLRIIKTLLVLIAKNVNITTLTSLNLFKNTTWGSKTLLNLGLNRQKELKLMSGLLISQKIKYSSSFQKWEKDEFSFLMTNYIENQYNYLISKILMRGILTKEEAYFYSRENCQDYLTEKLSFLHSETKQILTSIKLYLLRYQFMVQNNKNSSFSPWNLRFQEENFSLKSSISERTLNSSRIFSLKKQKSVLLDKTMYQKLKNFLQKEILSKNMKSLLENKHFILAYLNKELKAKLFYKVSRLQRKNTLLTETEIYEFSNTFKKLTASNLSVKLATNLSTLIAPTNLSTNFTKKIFKIYKSTNIPVYYNLLSNDTTFLDNKIDNVYLSKVLNKLKLQLNNNKLDLLMVNYTNDKLLRLRAKSSMYQTFAKLAFIENGMILNKHLFPVRSAKSVYLKQFNKNLKFVIYLYNLNMLRSRDILSVQQYEQFKDNYENIFKLIKRKTFVISILNKRKKWKFINYGTYQTLFKNISKNLTTKILSLFQQSTEKNFFQKEKVNKQVQYSLEVEALVQQTLEQLVNSSESPNHSLTSLIYRFIEKSIVFTHPSSNSLKQLTIENKTVIKPVIKKALQRLISLQKKLKSLGPWSSKEKIMLQNKQKTLILQSLVSYLQKQETPFNSNFKTVSNKFKQISMFQTLSFAQRKTVLNKLCLNTYFTPNLQTISNAKDLSNEKKSRALALSGQLTNLQFKLQKEYLTKLNVSLLKAEKNESDLISFNESILLMLQKTTGVDLTNYKQFSRIVTNNSNIDKGSLAKEIYTTKLLFEFIRQNLMDNYRKDKFNFELKQVSKFQKSQFLTNILFKGGSFSSRLSLKKCQNNLIKLKISKLLNHIFSVMPFVNNQTTTTGFISYDHIDTLVSFGIISSTMANVLNKKINVQIQKQKLRKTLLSLQNLQKMTFTSSNKFNRLIYSSILMDVFSRLYELKKAKTITERKYVLIKQKLKIFSLFSALNYKLLDLKEKGSISSSKALELKNQIIQKISQKMKKVKTFAKFKQSLKALKGENFSSRLSYLPKDLDSQKTLEKAKAFEFNPSLLKILKSRGRWARVTVKQLVKQKLLTTKQQEKLQTIVDKQNLMKMKKLRRLVSVFVYCRQIVETQRNTVANNSNYEPLMQNVISSVLKSFNGPWKRVLLNLLYKQNFISENLFLSYLTNNTQKTKSSKTKVISLNNNVDTTYTKTKLKRLLTMYYKQICKLRQFQTNREILKGEFEQKLSAILSSVILVLEKGGLDAFKVIYNTKWVNELCQSNLKINNQKNKNSQISSAIREFVSKYNFLKDQYLNTYKKLQLNDKMKLFKMYKTNLLQELVNLEKTIKSPNAQSFEKSEILSISRLEQLKMQGLISTKICNKLTVMLNNSLQRLIKLDRLFALQNLYLVTSEAKAISENASYMNTGAVLEANSSKVQIQTESNIIQNNEQYIKLKQKIFQSYFRYEYKHIEKSVIKQKLLLQRLDSYNLKQKTTKQYKTNLRRKKSKLLSSEQFNSFFQQLLNFLDSRYKSAGRNRRNPRINSIIRRLNQKLSFDKTLTKKFGDHLQTFIDKRFGPALPIPPHLELKRWKIKTSKLQSKQKLNLKYFILPVGIVRDLAPRRSVGLPILERLIVEYYSRN.

The S4 RNA-binding domain maps to 111–174; the sequence is MRLDNIVFRL…ISMELVSRFL (64 aa).

It belongs to the universal ribosomal protein uS4 family. Part of the 30S ribosomal subunit. Contacts protein S5. The interaction surface between S4 and S5 is involved in control of translational fidelity.

The protein resides in the plastid. It localises to the chloroplast. One of the primary rRNA binding proteins, it binds directly to 16S rRNA where it nucleates assembly of the body of the 30S subunit. In terms of biological role, with S5 and S12 plays an important role in translational accuracy. This Stigeoclonium helveticum (Green alga) protein is Small ribosomal subunit protein uS4c (rps4).